The primary structure comprises 739 residues: Phosphoribosylformylglycinamidine synthase subunit PurL (739 aa).

The active site involves histidine 54. ATP is bound by residues tyrosine 57 and lysine 96. Glutamate 98 is a binding site for Mg(2+). Substrate contacts are provided by residues 99-102 and arginine 121; that span reads SHNH. The active-site Proton acceptor is histidine 100. Aspartate 122 contributes to the Mg(2+) binding site. Glutamine 245 provides a ligand contact to substrate. Residue aspartate 273 coordinates Mg(2+). Position 317–319 (317–319) interacts with substrate; that stretch reads ESQ. ATP is bound by residues aspartate 500 and glycine 537. Asparagine 538 is a Mg(2+) binding site. Serine 540 provides a ligand contact to substrate.

The protein belongs to the FGAMS family. In terms of assembly, monomer. Part of the FGAM synthase complex composed of 1 PurL, 1 PurQ and 2 PurS subunits.

The protein localises to the cytoplasm. The catalysed reaction is N(2)-formyl-N(1)-(5-phospho-beta-D-ribosyl)glycinamide + L-glutamine + ATP + H2O = 2-formamido-N(1)-(5-O-phospho-beta-D-ribosyl)acetamidine + L-glutamate + ADP + phosphate + H(+). It participates in purine metabolism; IMP biosynthesis via de novo pathway; 5-amino-1-(5-phospho-D-ribosyl)imidazole from N(2)-formyl-N(1)-(5-phospho-D-ribosyl)glycinamide: step 1/2. Its function is as follows. Part of the phosphoribosylformylglycinamidine synthase complex involved in the purines biosynthetic pathway. Catalyzes the ATP-dependent conversion of formylglycinamide ribonucleotide (FGAR) and glutamine to yield formylglycinamidine ribonucleotide (FGAM) and glutamate. The FGAM synthase complex is composed of three subunits. PurQ produces an ammonia molecule by converting glutamine to glutamate. PurL transfers the ammonia molecule to FGAR to form FGAM in an ATP-dependent manner. PurS interacts with PurQ and PurL and is thought to assist in the transfer of the ammonia molecule from PurQ to PurL. The chain is Phosphoribosylformylglycinamidine synthase subunit PurL from Bacillus cereus (strain ATCC 10987 / NRS 248).